A 212-amino-acid polypeptide reads, in one-letter code: 2-dehydro-3-deoxy-phosphogluconate aldolase (212 aa).

E45 serves as the catalytic Proton acceptor. The pyruvate site is built by R49, T73, and K133. Catalysis depends on K133, which acts as the Schiff-base intermediate with substrate.

This sequence belongs to the KHG/KDPG aldolase family. Homotrimer.

It localises to the cytoplasm. It catalyses the reaction 2-dehydro-3-deoxy-6-phospho-D-gluconate = D-glyceraldehyde 3-phosphate + pyruvate. Its pathway is carbohydrate acid metabolism; 2-dehydro-3-deoxy-D-gluconate degradation; D-glyceraldehyde 3-phosphate and pyruvate from 2-dehydro-3-deoxy-D-gluconate: step 2/2. In terms of biological role, involved in the degradation of glucose via the Entner-Doudoroff pathway. Catalyzes the reversible, stereospecific retro-aldol cleavage of 2-keto-3-deoxy-6-phosphogluconate (KDPG) to pyruvate and D-glyceraldehyde-3-phosphate. In Haemophilus influenzae (strain ATCC 51907 / DSM 11121 / KW20 / Rd), this protein is 2-dehydro-3-deoxy-phosphogluconate aldolase (eda).